The primary structure comprises 351 residues: Blue-sensitive opsin (351 aa).

The Extracellular segment spans residues Met1–Ile40. Asn21 is a glycosylation site (N-linked (GlcNAc...) asparagine). A helical membrane pass occupies residues Phe41–Cys65. The Cytoplasmic portion of the chain corresponds to Thr66–Asn77. The helical transmembrane segment at Tyr78–Phe103 threads the bilayer. The Extracellular portion of the chain corresponds to Asn104 to Glu117. An intrachain disulfide couples Cys114 to Cys191. Residues Gly118 to Phe137 form a helical membrane-spanning segment. Residues Glu138–His156 are Cytoplasmic-facing. Residues Ala157–Ser180 form a helical membrane-spanning segment. Topologically, residues Arg181–Ser206 are extracellular. A helical transmembrane segment spans residues Tyr207–Leu234. At Lys235 to Lys256 the chain is on the cytoplasmic side. Residues Met257 to Val280 form a helical membrane-spanning segment. The Extracellular portion of the chain corresponds to Ser281–Asp288. Residues Leu289–Met313 traverse the membrane as a helical segment. At Lys300 the chain carries N6-(retinylidene)lysine. Topologically, residues Asn314 to Lys351 are cytoplasmic.

The protein belongs to the G-protein coupled receptor 1 family. Opsin subfamily. Post-translationally, phosphorylated on some or all of the serine and threonine residues present in the C-terminal region. As to expression, the color pigments are found in the cone photoreceptor cells.

It localises to the membrane. Its function is as follows. Visual pigments are the light-absorbing molecules that mediate vision. They consist of an apoprotein, opsin, covalently linked to cis-retinal. The polypeptide is Blue-sensitive opsin (Carassius auratus (Goldfish)).